The sequence spans 116 residues: UPF0342 protein CTC_01059 (116 aa).

Belongs to the UPF0342 family.

The polypeptide is UPF0342 protein CTC_01059 (Clostridium tetani (strain Massachusetts / E88)).